The primary structure comprises 428 residues: Palmitoyltransferase pfa4 (428 aa).

The Cytoplasmic portion of the chain corresponds to 1–10 (MLCRSFNISQ). Residues 11-31 (LAIPFVSVLISFLAYTSQLFF) traverse the membrane as a helical segment. Over 32–43 (YYFEEAPLRSEE) the chain is Lumenal. Residues 44–61 (FWRLNIFAVCIWVCYYRA) form a helical membrane-spanning segment. Over 62–134 (CTVDPGRIPK…SNCVSHFTYP (73 aa)) the chain is Cytoplasmic. One can recognise a DHHC domain in the interval 91 to 141 (RWCRRCEAFKPPRAHHCKTCQRCIPKMDHHCPWTSNCVSHFTYPHFMRFLF). C121 functions as the S-palmitoyl cysteine intermediate in the catalytic mechanism. Residues 135 to 155 (HFMRFLFYAVVGMGYLETLLF) form a helical membrane-spanning segment. Residues 156-177 (ERASIVWASRHLPSYLGPGLGQ) are Lumenal-facing. The chain crosses the membrane as a helical span at residues 178–198 (LVHLFILLVVNSLTWLALFIL). Topologically, residues 199–428 (LLRSIWSLAL…GILMQRRRQQ (230 aa)) are cytoplasmic. The tract at residues 339–400 (QRSNDASHSG…WKNSEGDRLR (62 aa)) is disordered. Residues 360–373 (DRFNENKAKERLSE) show a composition bias toward basic and acidic residues. Residues 374-388 (SESDFSDDEEVQDGE) are compositionally biased toward acidic residues. Over residues 389–400 (EGWKNSEGDRLR) the composition is skewed to basic and acidic residues.

The protein belongs to the DHHC palmitoyltransferase family. PFA4 subfamily.

It localises to the endoplasmic reticulum membrane. The catalysed reaction is L-cysteinyl-[protein] + hexadecanoyl-CoA = S-hexadecanoyl-L-cysteinyl-[protein] + CoA. Functionally, mediates the reversible addition of palmitate to target proteins, thereby regulating their membrane association and biological function. The sequence is that of Palmitoyltransferase pfa4 from Aspergillus fumigatus (strain ATCC MYA-4609 / CBS 101355 / FGSC A1100 / Af293) (Neosartorya fumigata).